Here is a 453-residue protein sequence, read N- to C-terminus: Calcium-binding tyrosine phosphorylation-regulated protein (453 aa).

Residues 12–49 enclose the RIIa domain; that stretch reads YGLKTLLEGVSRAILKTNPTNITQFAAVYFKELIVFRE. Disordered regions lie at residues 86–165, 246–278, and 406–453; these read PIKP…PVSA, PVSE…QVTS, and IINP…PEQV. A compositionally biased stretch (low complexity) spans 143–154; sequence DKPTTPKTDYTP.

Interacts with FSCB. Post-translationally, phosphorylated on tyrosine residues during in vitro capacitation. Dephosphorylation affects its ability to bind calcium. As to expression, expressed in spermatozoa.

Its subcellular location is the cytoplasm. It is found in the cytoskeleton. The protein localises to the cell projection. It localises to the cilium. The protein resides in the flagellum. May function as a regulator of both motility- and head-associated functions such as capacitation and the acrosome reaction. May bind calcium in vitro. The sequence is that of Calcium-binding tyrosine phosphorylation-regulated protein (Cabyr) from Mus musculus (Mouse).